A 202-amino-acid polypeptide reads, in one-letter code: Peptide deformylase (202 aa).

Fe cation is bound by residues Cys121 and His163. Glu164 is a catalytic residue. His167 provides a ligand contact to Fe cation.

The protein belongs to the polypeptide deformylase family. Fe(2+) is required as a cofactor.

The enzyme catalyses N-terminal N-formyl-L-methionyl-[peptide] + H2O = N-terminal L-methionyl-[peptide] + formate. In terms of biological role, removes the formyl group from the N-terminal Met of newly synthesized proteins. Requires at least a dipeptide for an efficient rate of reaction. N-terminal L-methionine is a prerequisite for activity but the enzyme has broad specificity at other positions. This chain is Peptide deformylase, found in Synechococcus sp. (strain CC9311).